The following is a 241-amino-acid chain: Probable transcriptional regulatory protein RSc2190 (241 aa).

The protein belongs to the TACO1 family.

Its subcellular location is the cytoplasm. In Ralstonia nicotianae (strain ATCC BAA-1114 / GMI1000) (Ralstonia solanacearum), this protein is Probable transcriptional regulatory protein RSc2190.